Here is a 426-residue protein sequence, read N- to C-terminus: 3-phosphoshikimate 1-carboxyvinyltransferase (426 aa).

Residues K22, S23, and R27 each contribute to the 3-phosphoshikimate site. Position 22 (K22) interacts with phosphoenolpyruvate. Phosphoenolpyruvate contacts are provided by G96 and R124. Positions 170, 171, 172, 198, 314, 337, and 341 each coordinate 3-phosphoshikimate. Q172 provides a ligand contact to phosphoenolpyruvate. Catalysis depends on D314, which acts as the Proton acceptor. Phosphoenolpyruvate-binding residues include R345, R387, and K412.

The protein belongs to the EPSP synthase family. Monomer.

It localises to the cytoplasm. The catalysed reaction is 3-phosphoshikimate + phosphoenolpyruvate = 5-O-(1-carboxyvinyl)-3-phosphoshikimate + phosphate. Its pathway is metabolic intermediate biosynthesis; chorismate biosynthesis; chorismate from D-erythrose 4-phosphate and phosphoenolpyruvate: step 6/7. Its function is as follows. Catalyzes the transfer of the enolpyruvyl moiety of phosphoenolpyruvate (PEP) to the 5-hydroxyl of shikimate-3-phosphate (S3P) to produce enolpyruvyl shikimate-3-phosphate and inorganic phosphate. In Photobacterium damsela subsp. piscicida (Pasteurella piscicida), this protein is 3-phosphoshikimate 1-carboxyvinyltransferase.